Here is a 494-residue protein sequence, read N- to C-terminus: UPF0371 protein SP70585_0405 (494 aa).

It belongs to the UPF0371 family.

In Streptococcus pneumoniae (strain 70585), this protein is UPF0371 protein SP70585_0405.